Reading from the N-terminus, the 653-residue chain is Macrolide export ATP-binding/permease protein MacB (653 aa).

An ABC transporter domain is found at 6–244 (IELQGVSRSY…PPLLPCSAHP (239 aa)). An ATP-binding site is contributed by 42 to 49 (GSSGSGKS). Helical transmembrane passes span 275 to 295 (LLTMAGIVFGIAAVVTVVGLG), 525 to 545 (FSVLITMVAMIALFIGSLGVM), 576 to 596 (FLIEAVLVCLTGGLLGVLLAL), and 616 to 636 (WPAVSGAFLCACAIGMVFGYW).

This sequence belongs to the ABC transporter superfamily. Macrolide exporter (TC 3.A.1.122) family. In terms of assembly, homodimer. Part of the tripartite efflux system MacAB-TolC, which is composed of an inner membrane transporter, MacB, a periplasmic membrane fusion protein, MacA, and an outer membrane component, TolC. The complex forms a large protein conduit and can translocate molecules across both the inner and outer membranes. Interacts with MacA.

It localises to the cell inner membrane. Its function is as follows. Part of the tripartite efflux system MacAB-TolC. MacB is a non-canonical ABC transporter that contains transmembrane domains (TMD), which form a pore in the inner membrane, and an ATP-binding domain (NBD), which is responsible for energy generation. Confers resistance against macrolides. This Sodalis glossinidius (strain morsitans) protein is Macrolide export ATP-binding/permease protein MacB.